Consider the following 485-residue polypeptide: GlcNAc-binding protein A (485 aa).

The signal sequence occupies residues 1–29 (MKKQPQKTLLAIALSVVSGTAMSHGYVSA). Positions 30–200 (VENGVAEARV…SFYNVIDVKF (171 aa)) constitute a Chitin-binding type-4 domain. Residues 437-478 (ADTKVLASDGAIYQCKPFPYSGYCVQWTPTATQYQPGTGSHW) enclose the Chitin-binding type-3 domain.

It belongs to the GbpA family.

It is found in the secreted. Functionally, probably interacts with GlcNAc residues. May promote attachment to both epithelial cell surfaces and chitin. This is GlcNAc-binding protein A from Vibrio vulnificus (strain CMCP6).